A 486-amino-acid polypeptide reads, in one-letter code: Probable transporter MCH1 (486 aa).

Topologically, residues 1–29 (MPLSKVEHYLSYHTRLLLPHVLSLQSSHR) are cytoplasmic. The helical transmembrane segment at 30–50 (VAYIFSLLSAVSTGFITLISL) threads the bilayer. The Vacuolar segment spans residues 51–67 (YSQPWQKHLNYSSWQIN). A glycan (N-linked (GlcNAc...) asparagine) is linked at Asn-60. The chain crosses the membrane as a helical span at residues 68–88 (TIASMTNLGMYLTPPILGMIA). Topologically, residues 89 to 93 (DSHGP) are cytoplasmic. A helical transmembrane segment spans residues 94 to 114 (ITLSLLAIIGFIPSYSYLAYV). The Vacuolar segment spans residues 115-133 (FNHPELSLGGNGDSSFNLS). Asn-131 carries an N-linked (GlcNAc...) asparagine glycan. The helical transmembrane segment at 134 to 154 (IICFVFIGISTSALYFSALLT) threads the bilayer. Topologically, residues 155-163 (CTKLYPHTK) are cytoplasmic. Residues 164–184 (LLSISLPTTCYGISSVVGSQL) form a helical membrane-spanning segment. The Vacuolar portion of the chain corresponds to 185–212 (LRIKWFWSSNASSSSSNSDLNLGRVFQT). Asn-194 carries N-linked (GlcNAc...) asparagine glycosylation. The helical transmembrane segment at 213–233 (FALVYVVIGLLAWIATSVVSL) threads the bilayer. Topologically, residues 234-279 (LHFNEEQDNQKRLDDQTDVEQSPLLERSNHVQEKFTQTMLRIFSDP) are cytoplasmic. Ser-255 bears the Phosphoserine mark. Residues 280 to 300 (VTYILAVSILLSLGPLEMFIA) form a helical membrane-spanning segment. Over 301–320 (NMGSLTNLLVQLDAPTLSTK) the chain is Vacuolar. A helical membrane pass occupies residues 321–343 (LLSTYALSSTFTRLLTGIVADFF). Residues 344–347 (AKKK) lie on the Cytoplasmic side of the membrane. The chain crosses the membrane as a helical span at residues 348-368 (ISIKWILLTFLSLGVCAQLFL). At 369-385 (LKMTSSASPWGLVPTGS) the chain is on the vacuolar side. A helical membrane pass occupies residues 386-406 (LVGIVYGGLFTVYPTLVLLVW). Residues 407–413 (GERSFGT) lie on the Cytoplasmic side of the membrane. The chain crosses the membrane as a helical span at residues 414-434 (VYGSLLIAPAIGSMIFCMLYA). Residues 435–456 (KFYDSRCMSGGGDLRNPSCISA) lie on the Vacuolar side of the membrane. Residues 457 to 477 (VYKYSSIAFVVSAVLSAVVFW) form a helical membrane-spanning segment. The Cytoplasmic portion of the chain corresponds to 478-486 (KLKSRKLRI).

The protein belongs to the major facilitator superfamily.

It is found in the vacuole membrane. In terms of biological role, probable transporter. Does not act in the transport of monocarboxylic acids across the plasma membrane. The chain is Probable transporter MCH1 (MCH1) from Saccharomyces cerevisiae (strain ATCC 204508 / S288c) (Baker's yeast).